We begin with the raw amino-acid sequence, 268 residues long: Calpain small subunit 1 (268 aa).

N-acetylmethionine is present on methionine 1. Residue serine 6 is modified to Phosphoserine. In terms of domain architecture, EF-hand 1; atypical spans glutamate 91–asparagine 125. Positions 109, 112, 114, 119, 137, 152, 154, 156, 158, and 163 each coordinate Ca(2+). EF-hand domains follow at residues phenylalanine 139–lysine 172, asparagine 169–histidine 204, leucine 205–leucine 233, and valine 234–serine 268. At lysine 179 the chain carries N6-acetyllysine. Residues aspartate 182, aspartate 184, serine 186, threonine 188, glutamate 193, and aspartate 225 each contribute to the Ca(2+) site.

As to quaternary structure, homodimer or heterodimer of a large (catalytic) and a small (regulatory) subunit. In presence of calcium, the heterodimer dissociates.

The protein resides in the cytoplasm. Its subcellular location is the cell membrane. Regulatory subunit of the calcium-regulated non-lysosomal thiol-protease which catalyzes limited proteolysis of substrates involved in cytoskeletal remodeling and signal transduction. Essential for embryonic development. The chain is Calpain small subunit 1 (CAPNS1) from Homo sapiens (Human).